Reading from the N-terminus, the 152-residue chain is Deoxyuridine 5'-triphosphate nucleotidohydrolase (152 aa).

Residues 71-73 (RSG), Asn84, 88-90 (LID), and Met98 each bind substrate.

It belongs to the dUTPase family. It depends on Mg(2+) as a cofactor.

The catalysed reaction is dUTP + H2O = dUMP + diphosphate + H(+). Its pathway is pyrimidine metabolism; dUMP biosynthesis; dUMP from dCTP (dUTP route): step 2/2. Its function is as follows. This enzyme is involved in nucleotide metabolism: it produces dUMP, the immediate precursor of thymidine nucleotides and it decreases the intracellular concentration of dUTP so that uracil cannot be incorporated into DNA. The chain is Deoxyuridine 5'-triphosphate nucleotidohydrolase from Aeromonas hydrophila subsp. hydrophila (strain ATCC 7966 / DSM 30187 / BCRC 13018 / CCUG 14551 / JCM 1027 / KCTC 2358 / NCIMB 9240 / NCTC 8049).